A 220-amino-acid polypeptide reads, in one-letter code: Avenin-3 (220 aa).

The signal sequence occupies residues 1 to 19 (MKTFLIFALLAMAATMATA). Gln-20 is subject to Pyrrolidone carboxylic acid. A run of 2 repeats spans residues 41-48 (QQMLLQQQ) and 49-56 (QQMLLQQQ). Residues 41 to 56 (QQMLLQQQQQMLLQQQ) are 2 X 8 AA tandem repeats of Q-Q-M-L-L-Q-Q-Q. 4 disulfide bridges follow: Cys-69–Cys-202, Cys-77–Cys-96, Cys-103–Cys-104, and Cys-116–Cys-210. A 2-1 repeat occupies 128-137 (MQQQQFFQPQ). Positions 128 to 146 (MQQQQFFQPQMQQQFFQPQ) are 2 X 10 AA tandem repeats of M-Q-Q-Q-Q-F-F-Q-P-Q. A 2-2; approximate repeat occupies 138–146 (MQQQFFQPQ).

It belongs to the gliadin/glutenin family. Monomer.

The protein resides in the vacuole. Seed storage protein. Serves as a source of nitrogen, carbon, and sulfur for the young developing seedling. The sequence is that of Avenin-3 from Avena sativa (Oat).